The primary structure comprises 64 residues: Large ribosomal subunit protein bL35 (64 aa).

Residues 19-41 (SGKVKRERMNGSHNLEHKNRKRT) are disordered. The segment covering 25–35 (ERMNGSHNLEH) has biased composition (basic and acidic residues).

Belongs to the bacterial ribosomal protein bL35 family.

This is Large ribosomal subunit protein bL35 from Chlorobaculum tepidum (strain ATCC 49652 / DSM 12025 / NBRC 103806 / TLS) (Chlorobium tepidum).